The chain runs to 361 residues: MKTTPFTETHIALGAKMHEFAGYNMPIEYSGIIDEHLTVCNAVGVFDVSHMGEFWVKGPNALEFLQQVTSNNVATLPVGKAQYTCFPNEEGGIVDDLLVYHYESEKYLLVVNAANIEKDWNWCVSHNTVGAELENASDRMAQLAIQGPKAMEVLQKLTPVNLSEIPYYAFTTGEFAGQKDVIISNTGYTGAGGFELYFYPEAGQAIWKAIFEAGAPEGIKPIGLGARDTLRLEMGFCLYGNDLSDTTSPLEAGLGWITKFVEGKNFTSRALLEKQKAEGLKRKLIAFEMVDRGIPRHGYELVNADGEKIGEVTSGTMSPMRKIGIGMGYVQTAYTALGTEIFIDVRGRKLKAVVVKAPFRK.

Belongs to the GcvT family. The glycine cleavage system is composed of four proteins: P, T, L and H.

It carries out the reaction N(6)-[(R)-S(8)-aminomethyldihydrolipoyl]-L-lysyl-[protein] + (6S)-5,6,7,8-tetrahydrofolate = N(6)-[(R)-dihydrolipoyl]-L-lysyl-[protein] + (6R)-5,10-methylene-5,6,7,8-tetrahydrofolate + NH4(+). In terms of biological role, the glycine cleavage system catalyzes the degradation of glycine. In Phocaeicola vulgatus (strain ATCC 8482 / DSM 1447 / JCM 5826 / CCUG 4940 / NBRC 14291 / NCTC 11154) (Bacteroides vulgatus), this protein is Aminomethyltransferase.